Reading from the N-terminus, the 385-residue chain is 8-amino-7-oxononanoate synthase (385 aa).

R21 lines the substrate pocket. 108-109 (GF) contacts pyridoxal 5'-phosphate. H133 provides a ligand contact to substrate. Pyridoxal 5'-phosphate-binding residues include S179, H207, and T233. The residue at position 236 (K236) is an N6-(pyridoxal phosphate)lysine. T352 contributes to the substrate binding site.

The protein belongs to the class-II pyridoxal-phosphate-dependent aminotransferase family. BioF subfamily. In terms of assembly, homodimer. It depends on pyridoxal 5'-phosphate as a cofactor.

It carries out the reaction 6-carboxyhexanoyl-[ACP] + L-alanine + H(+) = (8S)-8-amino-7-oxononanoate + holo-[ACP] + CO2. The protein operates within cofactor biosynthesis; biotin biosynthesis. Its function is as follows. Catalyzes the decarboxylative condensation of pimeloyl-[acyl-carrier protein] and L-alanine to produce 8-amino-7-oxononanoate (AON), [acyl-carrier protein], and carbon dioxide. This Salmonella paratyphi B (strain ATCC BAA-1250 / SPB7) protein is 8-amino-7-oxononanoate synthase.